Reading from the N-terminus, the 198-residue chain is Holliday junction resolvase RecU (198 aa).

Residues 1 to 29 (MIRYPNGKSYQPKTAASSLQKKPSYSNRG) are disordered. Over residues 8 to 29 (KSYQPKTAASSLQKKPSYSNRG) the composition is skewed to polar residues. 4 residues coordinate Mg(2+): Thr83, Asp85, Glu98, and Gln117.

The protein belongs to the RecU family. The cofactor is Mg(2+).

It localises to the cytoplasm. The catalysed reaction is Endonucleolytic cleavage at a junction such as a reciprocal single-stranded crossover between two homologous DNA duplexes (Holliday junction).. Functionally, endonuclease that resolves Holliday junction intermediates in genetic recombination. Cleaves mobile four-strand junctions by introducing symmetrical nicks in paired strands. Promotes annealing of linear ssDNA with homologous dsDNA. Required for DNA repair, homologous recombination and chromosome segregation. The chain is Holliday junction resolvase RecU from Bacillus licheniformis (strain ATCC 14580 / DSM 13 / JCM 2505 / CCUG 7422 / NBRC 12200 / NCIMB 9375 / NCTC 10341 / NRRL NRS-1264 / Gibson 46).